The primary structure comprises 257 residues: uncharacterized protein (257 aa).

The helical transmembrane segment at 6-26 threads the bilayer; the sequence is IFWLNLAAIIIISIVVSGDMF.

This sequence belongs to the staphylococcal tandem lipoprotein family.

Its subcellular location is the cell membrane. This is an uncharacterized protein from Staphylococcus aureus (strain NCTC 8325 / PS 47).